A 673-amino-acid polypeptide reads, in one-letter code: DNA ligase (673 aa).

NAD(+) contacts are provided by residues 35–39, 84–85, and Glu-115; these read DADYD and SL. Lys-117 functions as the N6-AMP-lysine intermediate in the catalytic mechanism. Residues Arg-138, Glu-180, Lys-296, and Lys-320 each coordinate NAD(+). Positions 415, 418, 433, and 438 each coordinate Zn(2+). Residues 595–673 enclose the BRCT domain; the sequence is ERGTALAGQT…EDALKKLLGK (79 aa).

This sequence belongs to the NAD-dependent DNA ligase family. LigA subfamily. Mg(2+) is required as a cofactor. The cofactor is Mn(2+).

It carries out the reaction NAD(+) + (deoxyribonucleotide)n-3'-hydroxyl + 5'-phospho-(deoxyribonucleotide)m = (deoxyribonucleotide)n+m + AMP + beta-nicotinamide D-nucleotide.. Functionally, DNA ligase that catalyzes the formation of phosphodiester linkages between 5'-phosphoryl and 3'-hydroxyl groups in double-stranded DNA using NAD as a coenzyme and as the energy source for the reaction. It is essential for DNA replication and repair of damaged DNA. The sequence is that of DNA ligase from Koribacter versatilis (strain Ellin345).